Consider the following 316-residue polypeptide: Protein C4 (316 aa).

This sequence belongs to the poxviridae OPG031 protein family.

Its subcellular location is the host cytoplasm. The protein resides in the host nucleus. In terms of biological role, plays a role in the inhibition of host NF-kappa-B activation. Mechanistically, blocks the subunit p65/RELA translocation into the host nucleus. In Homo sapiens (Human), this protein is Protein C4 (OPG031).